The following is a 543-amino-acid chain: Hydroxylamine reductase (543 aa).

[4Fe-4S] cluster contacts are provided by cysteine 3, cysteine 6, cysteine 15, and cysteine 21. 8 residues coordinate hybrid [4Fe-2O-2S] cluster: histidine 239, glutamate 263, cysteine 307, cysteine 398, cysteine 426, cysteine 451, glutamate 486, and lysine 488. The residue at position 398 (cysteine 398) is a Cysteine persulfide.

Belongs to the HCP family. It depends on [4Fe-4S] cluster as a cofactor. Requires hybrid [4Fe-2O-2S] cluster as cofactor.

It localises to the cytoplasm. It carries out the reaction A + NH4(+) + H2O = hydroxylamine + AH2 + H(+). Its function is as follows. Catalyzes the reduction of hydroxylamine to form NH(3) and H(2)O. This chain is Hydroxylamine reductase, found in Methanococcus vannielii (strain ATCC 35089 / DSM 1224 / JCM 13029 / OCM 148 / SB).